A 589-amino-acid chain; its full sequence is Ubiquilin-1 (589 aa).

The span at 1-11 (MAESGESGGPP) shows a compositional bias: gly residues. Disordered regions lie at residues 1–35 (MAES…AEPK) and 110–145 (NRPQ…ATSN). Ala2 is subject to N-acetylalanine. Over residues 12-35 (GSQDSAAGAEGAGAPAAAASAEPK) the composition is skewed to low complexity. The Ubiquitin-like domain maps to 37–111 (MKVTVKTPKE…VHLVIKTQNR (75 aa)). Positions 110 to 124 (NRPQDHSAQQTNTAG) are enriched in polar residues. Residues 125 to 145 (SNVTTSSTPNSNSTSGSATSN) show a composition bias toward low complexity. The interval 178-428 (QLLSNPEMMV…LNNPLFAGNP (251 aa)) is interaction with UBXN4. STI1 domains are found at residues 182–210 (NPEM…QLIM) and 212–251 (NPQM…MQEM). The tract at residues 295-371 (PFASLVSNTS…NLVPGVGASM (77 aa)) is disordered. The segment covering 299–313 (LVSNTSSGEGSQPSR) has biased composition (polar residues). Over residues 327–360 (QTSQSSSASSGTASTVGGTTGSTASGTSGQSTTA) the composition is skewed to low complexity. 2 STI1 domains span residues 387-434 (NPQL…QEQM) and 438-470 (LPTF…QQGL). The disordered stretch occupies residues 488 to 520 (LGALGSTGGSSGTNGSNATPSENTSPTAGTTEP). Residues 489–499 (GALGSTGGSSG) are compositionally biased toward gly residues. Polar residues predominate over residues 509–520 (ENTSPTAGTTEP). Residues 546–586 (RFQQQLEQPSAMGFLNREANLQALIATGGDINAAIERLLGS) enclose the UBA domain.

In terms of assembly, monomer and homodimer. Heterodimer with UBQLN2. Binds CD47, NBL1, GABRA1, GABRA2, GABRA3, GABRA6, GABRB1, GABRB2 and GABRB3. Binds UBE3A, BTRC, P4HB and MTOR. Interacts with the proteasome 19S subunit. Interacts (via ubiquitin-like domain) with TREX1; the interaction is direct and may control TREX1 subcellular location. Forms a complex with UBXN4 and VCP. Interacts (via UBA domain) with UBQLN4 (via ubiquitin-like domain). Found in a complex with UBQLN2 and MAP1LC3A/B/C. The monomeric form interacts with PSEN1 and PSEN2. Interacts with ORAI1. Interacts (via UBA domain) with TICAM1. Interacts with EPS15. Interacts (via UBA domain) with UBA52 and (via ubiquitin-like domain) with PSMD3 and PSMD4. Interacts with HERPUD1. Interacts with MAP1LC3A/B/C in the presence of UBQLN4. Interacts (via ubiquitin-like domain) with EPS15 (via UIM domains) and both the ubiquitinated and non-ubiquitinated forms can interact with EPS15. Interacts (via ubiquitin-like domain) with EPS15L1, HGS (via UIM domain) and STAM2 (via UIM domain). Interacts with BCL2L10/BCL-B; in the cytoplasm. In terms of processing, degraded during both macroautophagy and during chaperone-mediated autophagy (CMA). Post-translationally, phosphorylated. Ubiquitinated.

It localises to the nucleus. The protein localises to the cytoplasm. The protein resides in the endoplasmic reticulum. It is found in the cytoplasmic vesicle. Its subcellular location is the autophagosome. It localises to the cell membrane. Plays an important role in the regulation of different protein degradation mechanisms and pathways including ubiquitin-proteasome system (UPS), autophagy and endoplasmic reticulum-associated protein degradation (ERAD) pathway. Mediates the proteasomal targeting of misfolded or accumulated proteins for degradation by binding (via UBA domain) to their polyubiquitin chains and by interacting (via ubiquitin-like domain) with the subunits of the proteasome. Plays a role in the ERAD pathway via its interaction with ER-localized proteins UBXN4, VCP and HERPUD1 and may form a link between the polyubiquitinated ERAD substrates and the proteasome. Plays a role in unfolded protein response (UPR) by attenuating the induction of UPR-inducible genes, DDTI3/CHOP, HSPA5 and PDIA2 during ER stress. Involved in the regulation of macroautophagy and autophagosome formation; required for maturation of autophagy-related protein LC3 from the cytosolic form LC3-I to the membrane-bound form LC3-II and may assist in the maturation of autophagosomes to autolysosomes by mediating autophagosome-lysosome fusion. Negatively regulates the TICAM1/TRIF-dependent toll-like receptor signaling pathway by decreasing the abundance of TICAM1 via the autophagic pathway. Promotes the ubiquitination and lysosomal degradation of ORAI1, consequently down-regulating the ORAI1-mediated Ca2+ mobilization. Suppresses the maturation and proteasomal degradation of amyloid beta A4 protein (A4) by stimulating the lysine 63 (K63)-linked polyubiquitination. Delays the maturation of A4 by sequestering it in the Golgi apparatus and preventing its transport to the cell surface for subsequent processing. Ubiquitinates BCL2L10 and thereby stabilizes protein abundance. In Pongo abelii (Sumatran orangutan), this protein is Ubiquilin-1 (UBQLN1).